Consider the following 1016-residue polypeptide: KN motif and ankyrin repeat domain-containing protein 4 (1016 aa).

Disordered regions lie at residues 1–26 (MEKI…YPYS), 70–91 (PRNF…QQNW), 235–259 (AEPE…AVQS), 401–485 (LSQE…LPRG), 506–563 (EEGS…SPQD), and 622–755 (AQAP…VSHL). 2 stretches are compositionally biased toward polar residues: residues 70–80 (PRNFSLPNSGD) and 246–258 (SHLS…SAVQ). The stretch at 346-409 (SSLKNQVLAL…KLSQERASEA (64 aa)) forms a coiled coil. Composition is skewed to basic and acidic residues over residues 401-414 (LSQE…DRTD) and 445-454 (PECRAPRAEK). Positions 460–469 (VQNNHKQSYP) are enriched in polar residues. The span at 632-650 (TPAPPPSTPPPPPPPPPEI) shows a compositional bias: pro residues. Position 639 is a phosphothreonine (threonine 639). Over residues 695–708 (TSGEDSSPEDLSDS) the composition is skewed to acidic residues. 2 stretches are compositionally biased toward basic and acidic residues: residues 709-727 (ETEK…DLHP) and 745-755 (TSDRGEEVSHL). ANK repeat units follow at residues 838-868 (SGNT…NVDH), 877-905 (VMIT…NVNI), 910-939 (GGQT…DVNL), 943-973 (DGSS…NSSL), and 977-1007 (AGRT…PGRS).

It is found in the cytoplasm. Its function is as follows. May be involved in the control of cytoskeleton formation by regulating actin polymerization. The polypeptide is KN motif and ankyrin repeat domain-containing protein 4 (Kank4) (Mus musculus (Mouse)).